A 1030-amino-acid polypeptide reads, in one-letter code: Peroxisomal ATPase PEX6 (1030 aa).

The AAA-cassette D1 stretch occupies residues 478–683; it reads VLLHSTTNNV…VETARMTATA (206 aa). The interval 767–956 is AAA-cassette D2; that stretch reads GILFYGPPGT…CSDAMLNAMS (190 aa). 772–779 contributes to the ATP binding site; sequence GPPGTGKT.

The protein belongs to the AAA ATPase family. Interacts with PEX1; forming the PEX1-PEX6 AAA ATPase complex, which is composed of a heterohexamer formed by a trimer of PEX1-PEX6 dimers. Interacts with PEX15; anchors PEX1-PEX6 heterooligomers to the peroxisomal membrane and mediates their association with the peroxisomal importomer. Interacts with UBP15.

The protein localises to the cytoplasm. The protein resides in the cytosol. Its subcellular location is the peroxisome membrane. The catalysed reaction is ATP + H2O = ADP + phosphate + H(+). Component of the PEX1-PEX6 AAA ATPase complex, a protein dislocase complex that mediates the ATP-dependent extraction of the PEX5 receptor from peroxisomal membranes, an essential step for PEX5 recycling. Specifically recognizes PEX5 monoubiquitinated at 'Cys-6', and pulls it out of the peroxisome lumen through the PEX2-PEX10-PEX12 retrotranslocation channel. Extraction by the PEX1-PEX6 AAA ATPase complex is accompanied by unfolding of the TPR repeats and release of bound cargo from PEX5. The chain is Peroxisomal ATPase PEX6 from Saccharomyces cerevisiae (strain ATCC 204508 / S288c) (Baker's yeast).